We begin with the raw amino-acid sequence, 562 residues long: Dihydroxy-acid dehydratase 1 (562 aa).

Residue Asp80 coordinates Mg(2+). Cys121 is a [2Fe-2S] cluster binding site. Mg(2+) contacts are provided by Asp122 and Lys123. N6-carboxylysine is present on Lys123. A [2Fe-2S] cluster-binding site is contributed by Cys194. Glu446 contributes to the Mg(2+) binding site. The Proton acceptor role is filled by Ser472.

The protein belongs to the IlvD/Edd family. As to quaternary structure, homodimer. The cofactor is [2Fe-2S] cluster. Mg(2+) is required as a cofactor.

The enzyme catalyses (2R)-2,3-dihydroxy-3-methylbutanoate = 3-methyl-2-oxobutanoate + H2O. It carries out the reaction (2R,3R)-2,3-dihydroxy-3-methylpentanoate = (S)-3-methyl-2-oxopentanoate + H2O. The protein operates within amino-acid biosynthesis; L-isoleucine biosynthesis; L-isoleucine from 2-oxobutanoate: step 3/4. Its pathway is amino-acid biosynthesis; L-valine biosynthesis; L-valine from pyruvate: step 3/4. Functionally, functions in the biosynthesis of branched-chain amino acids. Catalyzes the dehydration of (2R,3R)-2,3-dihydroxy-3-methylpentanoate (2,3-dihydroxy-3-methylvalerate) into 2-oxo-3-methylpentanoate (2-oxo-3-methylvalerate) and of (2R)-2,3-dihydroxy-3-methylbutanoate (2,3-dihydroxyisovalerate) into 2-oxo-3-methylbutanoate (2-oxoisovalerate), the penultimate precursor to L-isoleucine and L-valine, respectively. The sequence is that of Dihydroxy-acid dehydratase 1 from Staphylococcus saprophyticus subsp. saprophyticus (strain ATCC 15305 / DSM 20229 / NCIMB 8711 / NCTC 7292 / S-41).